The following is a 300-amino-acid chain: Sulfate adenylyltransferase subunit 2 (300 aa).

This sequence belongs to the PAPS reductase family. CysD subfamily. Heterodimer composed of CysD, the smaller subunit, and CysN.

It carries out the reaction sulfate + ATP + H(+) = adenosine 5'-phosphosulfate + diphosphate. It functions in the pathway sulfur metabolism; hydrogen sulfide biosynthesis; sulfite from sulfate: step 1/3. In terms of biological role, with CysN forms the ATP sulfurylase (ATPS) that catalyzes the adenylation of sulfate producing adenosine 5'-phosphosulfate (APS) and diphosphate, the first enzymatic step in sulfur assimilation pathway. APS synthesis involves the formation of a high-energy phosphoric-sulfuric acid anhydride bond driven by GTP hydrolysis by CysN coupled to ATP hydrolysis by CysD. The sequence is that of Sulfate adenylyltransferase subunit 2 from Magnetococcus marinus (strain ATCC BAA-1437 / JCM 17883 / MC-1).